Consider the following 950-residue polypeptide: Protocadherin alpha-8 (950 aa).

The first 29 residues, 1-29 (MVYHWRGDLGSWRLLLLLLLLAAWKVGSG), serve as a signal peptide directing secretion. Cadherin domains are found at residues 30 to 133 (QLHY…PPVF), 157 to 242 (ASDA…APNF), 243 to 350 (EQSE…VPEI), 351 to 455 (ALTS…APAF), 456 to 565 (AQPE…APAL), and 581 to 678 (VPRS…APKA). Over 30-697 (QLHYSVPEEA…GPEAALVDVN (668 aa)) the chain is Extracellular. N-linked (GlcNAc...) asparagine glycosylation is found at asparagine 257 and asparagine 265. Asparagine 548 is a glycosylation site (N-linked (GlcNAc...) asparagine). Residues 698-718 (VYLIIAICAVSSLLVLTLLLY) form a helical membrane-spanning segment. The Cytoplasmic portion of the chain corresponds to 719–950 (TALRCSALPT…GNSTTDNSDQ (232 aa)). 5 PXXP repeats span residues 774–777 (PCLP), 799–802 (PRQP), 832–835 (PGGP), 873–876 (PGNP), and 891–894 (PGSP). The 5 X 4 AA repeats of P-X-X-P stretch occupies residues 774–894 (PCLPPDLGSV…PDKFIIPGSP (121 aa)). A disordered region spans residues 831–950 (GPGGPDQQWP…GNSTTDNSDQ (120 aa)). Residues 909 to 923 (DKSDFITFGKKEETK) show a composition bias toward basic and acidic residues.

It is found in the cell membrane. Its function is as follows. Potential calcium-dependent cell-adhesion protein. May be involved in the establishment and maintenance of specific neuronal connections in the brain. The polypeptide is Protocadherin alpha-8 (PCDHA8) (Pan troglodytes (Chimpanzee)).